A 279-amino-acid polypeptide reads, in one-letter code: Bifunctional protein FolD (279 aa).

NADP(+)-binding positions include 158 to 160 (GRS), Ser183, and Ile224.

This sequence belongs to the tetrahydrofolate dehydrogenase/cyclohydrolase family. Homodimer.

It catalyses the reaction (6R)-5,10-methylene-5,6,7,8-tetrahydrofolate + NADP(+) = (6R)-5,10-methenyltetrahydrofolate + NADPH. The enzyme catalyses (6R)-5,10-methenyltetrahydrofolate + H2O = (6R)-10-formyltetrahydrofolate + H(+). It participates in one-carbon metabolism; tetrahydrofolate interconversion. In terms of biological role, catalyzes the oxidation of 5,10-methylenetetrahydrofolate to 5,10-methenyltetrahydrofolate and then the hydrolysis of 5,10-methenyltetrahydrofolate to 10-formyltetrahydrofolate. The sequence is that of Bifunctional protein FolD from Caldicellulosiruptor saccharolyticus (strain ATCC 43494 / DSM 8903 / Tp8T 6331).